A 562-amino-acid chain; its full sequence is Bacillolysin (562 aa).

The first 24 residues, 1 to 24 (MKKKKQALKVLLSVGILSSSFAFA), serve as a signal peptide directing secretion. Positions 25–245 (HTSSAAPNNV…KQAAKPAAKP (221 aa)) are cleaved as a propeptide — activation peptide. The Ca(2+) site is built by aspartate 303, aspartate 305, and aspartate 384. Zn(2+) is bound at residue histidine 388. Residue glutamate 389 is part of the active site. Positions 392 and 412 each coordinate Zn(2+). Ca(2+) is bound by residues glutamate 423, asparagine 429, aspartate 431, glutamate 433, glutamate 436, tyrosine 439, threonine 440, and aspartate 446. The active-site Proton donor is the histidine 477.

The protein belongs to the peptidase M4 family. Ca(2+) serves as cofactor. Zn(2+) is required as a cofactor.

The protein resides in the secreted. It carries out the reaction Similar, but not identical, to that of thermolysin.. Its function is as follows. Extracellular zinc metalloprotease. In Priestia megaterium (strain ATCC 14581 / DSM 32 / CCUG 1817 / JCM 2506 / NBRC 15308 / NCIMB 9376 / NCTC 10342 / NRRL B-14308 / VKM B-512 / Ford 19) (Bacillus megaterium), this protein is Bacillolysin.